A 179-amino-acid polypeptide reads, in one-letter code: MTLASAEKEMAGVLTFFQKETRGFRTGKAHPALVETVTVEVYGTTMRLSDIASISVSDMRQLLISPYDAGTVSAISKGILAANLNLQPIVEGATVRINVPEPTEEYRREVIKQLKRKSEEAKVAIRNIRRTFNDRLKKDDNLTEDAVKSLEKKIQELTDKFCKQIEELAKQKEAELATV.

This sequence belongs to the RRF family.

Its subcellular location is the cytoplasm. Its function is as follows. Responsible for the release of ribosomes from messenger RNA at the termination of protein biosynthesis. May increase the efficiency of translation by recycling ribosomes from one round of translation to another. The sequence is that of Ribosome-recycling factor from Chlamydia trachomatis serovar L2b (strain UCH-1/proctitis).